We begin with the raw amino-acid sequence, 192 residues long: MNSSMASAGLGSRRKDPVYRGIRCRSGKWVSEIREPRKTTRIWLGTYPMAEMAAAAYDVAAMALKGREAVLNFPGSVGSYPVPESTSAADIRAAAAAAAAMKGCEEGEEEKKAKEKKSSSSKSRARECHVDNDVGSSSWCGTEFMDEEEVLNMPNLLANMAEGMMVAPPSWMGSRPSDDSPENSNDEDLWGY.

Residues 18-74 (VYRGIRCRSGKWVSEIREPRKTTRIWLGTYPMAEMAAAAYDVAAMALKGREAVLNFP) constitute a DNA-binding region (AP2/ERF). Disordered stretches follow at residues 104–132 (CEEG…HVDN) and 167–192 (APPS…LWGY). Residues 179–192 (DSPENSNDEDLWGY) show a composition bias toward acidic residues.

This sequence belongs to the AP2/ERF transcription factor family. ERF subfamily.

The protein resides in the nucleus. Its function is as follows. Probably acts as a transcriptional activator. Binds to the GCC-box pathogenesis-related promoter element. May be involved in the regulation of gene expression by stress factors and by components of stress signal transduction pathways. The polypeptide is Ethylene-responsive transcription factor ERF027 (ERF027) (Arabidopsis thaliana (Mouse-ear cress)).